Consider the following 113-residue polypeptide: Iron-sulfur cluster insertion protein ErpA (113 aa).

Iron-sulfur cluster is bound by residues C41, C105, and C107.

It belongs to the HesB/IscA family. In terms of assembly, homodimer. The cofactor is iron-sulfur cluster.

Required for insertion of 4Fe-4S clusters for at least IspG. The protein is Iron-sulfur cluster insertion protein ErpA of Actinobacillus succinogenes (strain ATCC 55618 / DSM 22257 / CCUG 43843 / 130Z).